The chain runs to 260 residues: MQKDYQKLIAYLCDFLEKEVQKKGFKKVVYGLSGGLDSAVVGVLCQKVFKENAHALLMPSSASMPESKTDALNLCEMFSIPYTEYSIAPYDKIFGFHFKDASLTRKGNFCARLRMAFLYDYSLKSDSLVIGTSNKSERMLGYGTLFGDLACAINPIGELFKTEVYELARHLNIPKKILNKPPSADLFVGQSDEKDLGYPYSVIDPLLKDIEALFKNKPIDAEALTQLGYDEILVKNITSRIQKNAFKLELPTIAKRFNPE.

31 to 38 lines the ATP pocket; sequence GLSGGLDS. Position 37 (D37) interacts with Mg(2+). Residue R112 coordinates deamido-NAD(+). T132 contacts ATP. Residue E137 coordinates Mg(2+). The ATP site is built by K161 and S183.

The protein belongs to the NAD synthetase family. Homodimer.

It carries out the reaction deamido-NAD(+) + NH4(+) + ATP = AMP + diphosphate + NAD(+) + H(+). Its pathway is cofactor biosynthesis; NAD(+) biosynthesis; NAD(+) from deamido-NAD(+) (ammonia route): step 1/1. In terms of biological role, catalyzes the ATP-dependent amidation of deamido-NAD to form NAD. Uses ammonia as a nitrogen source. The sequence is that of NH(3)-dependent NAD(+) synthetase from Helicobacter pylori (strain P12).